Reading from the N-terminus, the 308-residue chain is tRNA pseudouridine synthase B (308 aa).

Asp37 functions as the Nucleophile in the catalytic mechanism.

Belongs to the pseudouridine synthase TruB family. Type 1 subfamily.

The catalysed reaction is uridine(55) in tRNA = pseudouridine(55) in tRNA. Responsible for synthesis of pseudouridine from uracil-55 in the psi GC loop of transfer RNAs. The protein is tRNA pseudouridine synthase B of Deinococcus radiodurans (strain ATCC 13939 / DSM 20539 / JCM 16871 / CCUG 27074 / LMG 4051 / NBRC 15346 / NCIMB 9279 / VKM B-1422 / R1).